Reading from the N-terminus, the 205-residue chain is Ribonuclease HII (205 aa).

An RNase H type-2 domain is found at 13–205; sequence TIVAGVDEVG…APVKYMLSMC (193 aa). 3 residues coordinate a divalent metal cation: aspartate 19, glutamate 20, and aspartate 114.

It belongs to the RNase HII family. It depends on Mn(2+) as a cofactor. Mg(2+) is required as a cofactor.

The protein localises to the cytoplasm. The enzyme catalyses Endonucleolytic cleavage to 5'-phosphomonoester.. Its function is as follows. Endonuclease that specifically degrades the RNA of RNA-DNA hybrids. The sequence is that of Ribonuclease HII from Blochmanniella floridana.